Reading from the N-terminus, the 357-residue chain is Large ribosomal subunit protein mL45 (357 aa).

A disordered region spans residues 333-357 (EAKALPLRTTEKLEEAKKEKEQQEI). Residues 341-357 (TTEKLEEAKKEKEQQEI) show a composition bias toward basic and acidic residues.

Belongs to the mitochondrion-specific ribosomal protein mL45 family.

It localises to the mitochondrion. The polypeptide is Large ribosomal subunit protein mL45 (mrpl-45) (Caenorhabditis elegans).